Here is a 259-residue protein sequence, read N- to C-terminus: Type III pantothenate kinase (259 aa).

Residue 6–13 (DVGNTNIV) participates in ATP binding. Residues tyrosine 100 and 107-110 (GADR) contribute to the substrate site. Aspartate 109 functions as the Proton acceptor in the catalytic mechanism. Residue aspartate 129 participates in K(+) binding. An ATP-binding site is contributed by threonine 132. Residue threonine 184 participates in substrate binding.

The protein belongs to the type III pantothenate kinase family. Homodimer. Requires NH4(+) as cofactor. It depends on K(+) as a cofactor.

Its subcellular location is the cytoplasm. The enzyme catalyses (R)-pantothenate + ATP = (R)-4'-phosphopantothenate + ADP + H(+). It participates in cofactor biosynthesis; coenzyme A biosynthesis; CoA from (R)-pantothenate: step 1/5. Functionally, catalyzes the phosphorylation of pantothenate (Pan), the first step in CoA biosynthesis. The chain is Type III pantothenate kinase from Clostridium perfringens (strain ATCC 13124 / DSM 756 / JCM 1290 / NCIMB 6125 / NCTC 8237 / Type A).